Here is a 685-residue protein sequence, read N- to C-terminus: Putative mannosyltransferase YycA (685 aa).

A run of 6 helical transmembrane segments spans residues 6 to 26, 68 to 88, 109 to 129, 154 to 174, 176 to 196, and 204 to 224; these read FDAA…YHIW, VLWI…SVII, FGVG…IAVA, AVKQ…GLAF, MKMM…LIAS, and IGSL…WAIA. Positions 269–347 are disordered; the sequence is MNAAGGGNMQ…GGGGGKSVNM (79 aa). Residues 277 to 286 show a composition bias toward polar residues; the sequence is MQNQDNMQAP. Residues 287–303 show a composition bias toward low complexity; it reads NGNGSSFSQNGNQSFGN. Over residues 318 to 343 the composition is skewed to gly residues; it reads LNGGGGTPPTGGNGPGNGGPGGGGGK. A run of 7 helical transmembrane segments spans residues 363-383, 399-419, 422-442, 455-475, 479-499, 513-533, and 573-593; these read LSGQ…GAII, TLFW…AGFF, YYLI…WYTM, YLLP…LSAY, IGSV…LALL, IISL…PLLY, and TGEE…YIIY. Residues 652–685 form a disordered region; that stretch reads TSDEYSGSSSSTNSVQGMRRGPGGESQQTLYLVE. The span at 654 to 665 shows a compositional bias: low complexity; it reads DEYSGSSSSTNS. A compositionally biased stretch (polar residues) spans 676–685; that stretch reads ESQQTLYLVE.

It belongs to the glycosyltransferase 39 family.

It is found in the cell membrane. This is Putative mannosyltransferase YycA (yycA) from Bacillus subtilis (strain 168).